Consider the following 226-residue polypeptide: Octanoyltransferase (226 aa).

Residues 34–212 (LAAPDVLLTL…AFSRVFGLEF (179 aa)) form the BPL/LPL catalytic domain. Residues 76-83 (RGGDVTYH), 143-145 (AIG), and 156-158 (GIA) contribute to the substrate site. The active-site Acyl-thioester intermediate is the cysteine 174.

It belongs to the LipB family.

The protein resides in the cytoplasm. It catalyses the reaction octanoyl-[ACP] + L-lysyl-[protein] = N(6)-octanoyl-L-lysyl-[protein] + holo-[ACP] + H(+). It functions in the pathway protein modification; protein lipoylation via endogenous pathway; protein N(6)-(lipoyl)lysine from octanoyl-[acyl-carrier-protein]: step 1/2. In terms of biological role, catalyzes the transfer of endogenously produced octanoic acid from octanoyl-acyl-carrier-protein onto the lipoyl domains of lipoate-dependent enzymes. Lipoyl-ACP can also act as a substrate although octanoyl-ACP is likely to be the physiological substrate. The polypeptide is Octanoyltransferase (Thermosynechococcus vestitus (strain NIES-2133 / IAM M-273 / BP-1)).